A 227-amino-acid polypeptide reads, in one-letter code: MAYPFQLGLQDATSPIMEELANFHDHTLMIVFLISSLVLYIISSMLTTKLTHTSTMDAQEVETIWTILPAVILILIALPSLRILYMMDEINNPALTVKTMGHQWYWSYEYTDYEDLCFDSYMVPTNDLKPGDLRLLEVDNRVVLPMELPIRMLISSEDVLHSWAVPSLGLKTDAIPGRLNQATVTSNRPGLFYGQCSEICGSNHSFMPIVLEMVPLKHFENWSASMI.

Residues 1–14 (MAYPFQLGLQDATS) are Mitochondrial intermembrane-facing. The helical transmembrane segment at 15 to 45 (PIMEELANFHDHTLMIVFLISSLVLYIISSM) threads the bilayer. At 46-59 (LTTKLTHTSTMDAQ) the chain is on the mitochondrial matrix side. A helical transmembrane segment spans residues 60–87 (EVETIWTILPAVILILIALPSLRILYMM). The Mitochondrial intermembrane portion of the chain corresponds to 88–227 (DEINNPALTV…HFENWSASMI (140 aa)). Cu cation contacts are provided by His-161, Cys-196, Glu-198, Cys-200, His-204, and Met-207. Position 198 (Glu-198) interacts with Mg(2+).

The protein belongs to the cytochrome c oxidase subunit 2 family. As to quaternary structure, component of the cytochrome c oxidase (complex IV, CIV), a multisubunit enzyme composed of 14 subunits. The complex is composed of a catalytic core of 3 subunits MT-CO1, MT-CO2 and MT-CO3, encoded in the mitochondrial DNA, and 11 supernumerary subunits COX4I, COX5A, COX5B, COX6A, COX6B, COX6C, COX7A, COX7B, COX7C, COX8 and NDUFA4, which are encoded in the nuclear genome. The complex exists as a monomer or a dimer and forms supercomplexes (SCs) in the inner mitochondrial membrane with NADH-ubiquinone oxidoreductase (complex I, CI) and ubiquinol-cytochrome c oxidoreductase (cytochrome b-c1 complex, complex III, CIII), resulting in different assemblies (supercomplex SCI(1)III(2)IV(1) and megacomplex MCI(2)III(2)IV(2)). Found in a complex with TMEM177, COA6, COX18, COX20, SCO1 and SCO2. Interacts with TMEM177 in a COX20-dependent manner. Interacts with COX20. Interacts with COX16. Cu cation serves as cofactor.

It is found in the mitochondrion inner membrane. It catalyses the reaction 4 Fe(II)-[cytochrome c] + O2 + 8 H(+)(in) = 4 Fe(III)-[cytochrome c] + 2 H2O + 4 H(+)(out). In terms of biological role, component of the cytochrome c oxidase, the last enzyme in the mitochondrial electron transport chain which drives oxidative phosphorylation. The respiratory chain contains 3 multisubunit complexes succinate dehydrogenase (complex II, CII), ubiquinol-cytochrome c oxidoreductase (cytochrome b-c1 complex, complex III, CIII) and cytochrome c oxidase (complex IV, CIV), that cooperate to transfer electrons derived from NADH and succinate to molecular oxygen, creating an electrochemical gradient over the inner membrane that drives transmembrane transport and the ATP synthase. Cytochrome c oxidase is the component of the respiratory chain that catalyzes the reduction of oxygen to water. Electrons originating from reduced cytochrome c in the intermembrane space (IMS) are transferred via the dinuclear copper A center (CU(A)) of subunit 2 and heme A of subunit 1 to the active site in subunit 1, a binuclear center (BNC) formed by heme A3 and copper B (CU(B)). The BNC reduces molecular oxygen to 2 water molecules using 4 electrons from cytochrome c in the IMS and 4 protons from the mitochondrial matrix. The chain is Cytochrome c oxidase subunit 2 (MT-CO2) from Malacomys longipes (Big-eared swamp rat).